Reading from the N-terminus, the 641-residue chain is WW domain-binding protein 11 (641 aa).

A compositionally biased stretch (polar residues) spans 1 to 11 (MGRRSTSSTKS). The disordered stretch occupies residues 1–37 (MGRRSTSSTKSGKFMNPTDQARKEARKRELKKNKKQR). The required for nuclear import stretch occupies residues 1–45 (MGRRSTSSTKSGKFMNPTDQARKEARKRELKKNKKQRMMVRAAVL). Lys-13 bears the N6-acetyllysine mark. Basic residues predominate over residues 28-37 (RELKKNKKQR). The stretch at 75–133 (EKVLKDKRKKLRETFERILRLYEKENPDIYKELRKLEVEYEQKRAQLSQYFDAVKNAQH) forms a coiled coil. Position 181 is a phosphoserine (Ser-181). The disordered stretch occupies residues 186-213 (LGHGVPRLPPGRKPPGPPPGPPPPQVVQ). Omega-N-methylarginine is present on Arg-192. Over residues 192–210 (RLPPGRKPPGPPPGPPPPQ) the composition is skewed to pro residues. Residues 217–221 (RKVGF) form an interaction with PP1 region. Tyr-236 is modified (phosphotyrosine). The disordered stretch occupies residues 236 to 552 (YSPELAQRGH…RPKADDTSAA (317 aa)). Ser-237 carries the post-translational modification Phosphoserine. The span at 253–263 (SEDDGYPEDMD) shows a compositional bias: acidic residues. The segment covering 276 to 304 (TDKSDGESDGDEFVHRDNGERDNNEEKKS) has biased composition (basic and acidic residues). Ser-279 and Ser-283 each carry phosphoserine. Positions 306–310 (LSVRF) are interaction with PP1. A compositionally biased stretch (acidic residues) spans 351 to 365 (EFSEDDDEDDSDDSE). Phosphoserine is present on residues Ser-353, Ser-361, and Ser-364. The span at 366–380 (AEKQSQKQHKEESHS) shows a compositional bias: basic and acidic residues. Low complexity predominate over residues 386–404 (ASSQQQAPPQSVPPSQIQA). 3 stretches are compositionally biased toward pro residues: residues 405–447 (PPMP…PPGM), 456–504 (RLLP…PPRP), and 510–530 (PLVPPLGPAPPGLFPPAPLPN). A PGR motif is present at residues 455-466 (PRLLPPGPPPGR). Lys-557 participates in a covalent cross-link: Glycyl lysine isopeptide (Lys-Gly) (interchain with G-Cter in SUMO2). Lys-565 carries the post-translational modification N6-acetyllysine. Lys-572 is covalently cross-linked (Glycyl lysine isopeptide (Lys-Gly) (interchain with G-Cter in SUMO2)). Residues 587-623 (RENKGATAAPQRKSEDDSAVPLAKAAPKSGPSVPVSV) form a disordered region. A Phosphoserine modification is found at Ser-600.

Interacts with PPP1CA, PPP1CB and PPP1CC. Interacts via the PGR motif with PQBP1 in the nucleus. Interacts with the WW domains of WBP4. In terms of tissue distribution, ubiquitous. Highly expressed in the heart, pancreas, kidney skeletal muscle, placenta and brain (at protein level). Weakly expressed in liver and lung.

It localises to the nucleus. The protein localises to the cytoplasm. Its function is as follows. Activates pre-mRNA splicing. May inhibit PP1 phosphatase activity. This Homo sapiens (Human) protein is WW domain-binding protein 11.